Consider the following 97-residue polypeptide: Putative CC-type chemokine U83 (97 aa).

Intrachain disulfides connect Cys-32/Cys-62 and Cys-33/Cys-76.

The protein belongs to the intercrine beta (chemokine CC) family. Highly divergent.

The chain is Putative CC-type chemokine U83 (U83) from Homo sapiens (Human).